Reading from the N-terminus, the 172-residue chain is Endoribonuclease YbeY (172 aa).

3 residues coordinate Zn(2+): His134, His138, and His144.

It belongs to the endoribonuclease YbeY family. The cofactor is Zn(2+).

The protein resides in the cytoplasm. Its function is as follows. Single strand-specific metallo-endoribonuclease involved in late-stage 70S ribosome quality control and in maturation of the 3' terminus of the 16S rRNA. The polypeptide is Endoribonuclease YbeY (Burkholderia cenocepacia (strain HI2424)).